Here is a 230-residue protein sequence, read N- to C-terminus: Large ribosomal subunit protein uL1 (230 aa).

This sequence belongs to the universal ribosomal protein uL1 family. As to quaternary structure, part of the 50S ribosomal subunit.

Functionally, binds directly to 23S rRNA. The L1 stalk is quite mobile in the ribosome, and is involved in E site tRNA release. Its function is as follows. Protein L1 is also a translational repressor protein, it controls the translation of the L11 operon by binding to its mRNA. In Staphylococcus aureus (strain Mu3 / ATCC 700698), this protein is Large ribosomal subunit protein uL1.